Consider the following 549-residue polypeptide: Oxygen-dependent choline dehydrogenase (549 aa).

4–33 (DFVIIGSGSAGSAMAYRLSEDGRYSVIVIE) contacts FAD. The active-site Proton acceptor is H465.

The protein belongs to the GMC oxidoreductase family. FAD is required as a cofactor.

The catalysed reaction is choline + A = betaine aldehyde + AH2. It catalyses the reaction betaine aldehyde + NAD(+) + H2O = glycine betaine + NADH + 2 H(+). The protein operates within amine and polyamine biosynthesis; betaine biosynthesis via choline pathway; betaine aldehyde from choline (cytochrome c reductase route): step 1/1. Its function is as follows. Involved in the biosynthesis of the osmoprotectant glycine betaine. Catalyzes the oxidation of choline to betaine aldehyde and betaine aldehyde to glycine betaine at the same rate. This chain is Oxygen-dependent choline dehydrogenase, found in Brucella melitensis biotype 1 (strain ATCC 23456 / CCUG 17765 / NCTC 10094 / 16M).